The chain runs to 249 residues: Probable septum site-determining protein MinC (249 aa).

The tract at residues 115 to 141 (KPAQEAPAQAEPEAAAAPEPANEPAPA) is disordered. A compositionally biased stretch (low complexity) spans 118 to 141 (QEAPAQAEPEAAAAPEPANEPAPA).

This sequence belongs to the MinC family. Interacts with MinD and FtsZ.

Functionally, cell division inhibitor that blocks the formation of polar Z ring septums. Rapidly oscillates between the poles of the cell to destabilize FtsZ filaments that have formed before they mature into polar Z rings. Prevents FtsZ polymerization. This is Probable septum site-determining protein MinC from Marinobacter nauticus (strain ATCC 700491 / DSM 11845 / VT8) (Marinobacter aquaeolei).